We begin with the raw amino-acid sequence, 1010 residues long: Signal peptide, CUB and EGF-like domain-containing protein 2 (1010 aa).

A signal peptide spans 1–24; sequence MGAVWTVRLLCLFLLLLNTRQSAA. The EGF-like 1; calcium-binding domain occupies 28-68; sequence NTDQCAEGSDACHIDAICQNTPTSYKCTCKTGFKGDGKHCE. Intrachain disulfides connect Cys-32-Cys-45, Cys-39-Cys-54, Cys-56-Cys-67, Cys-73-Cys-85, Cys-81-Cys-94, Cys-96-Cys-109, Cys-115-Cys-126, and Cys-122-Cys-135. The EGF-like 2; calcium-binding domain maps to 69–110; sequence DIDECDVEYNGGCVHECNNIPGNYRCTCLDGFHLAHDGHNCL. The EGF-like 3; calcium-binding domain occupies 111 to 147; it reads DVDECVFNNGGCQHVCVNTMGSYECRCKQGFFLSDNQ. EGF-like domains are found at residues 160–196 and 200–235; these read CMNK…QRGC and CNHG…GRTC. An N-linked (GlcNAc...) asparagine glycan is attached at Asn-249. Positions 269–304 constitute an EGF-like 6 domain; the sequence is CAVNNGGCDSTCKDTSTGVRCSCPVGFTLQPDGKSC. The 41-residue stretch at 306–346 folds into the EGF-like 7; calcium-binding domain; sequence DIDECELHNGGCDHYCRNTIGSFECSCRKGFKLLTDERSCQ. 9 disulfides stabilise this stretch: Cys-310/Cys-321, Cys-317/Cys-330, Cys-332/Cys-345, Cys-351/Cys-361, Cys-357/Cys-370, Cys-372/Cys-384, Cys-390/Cys-401, Cys-397/Cys-410, and Cys-412/Cys-425. The EGF-like 8; calcium-binding domain maps to 347–385; it reads DIDECFFERTCDHTCVNSPGSFQCVCNKGYTLYGLAHCG. Residues 386-426 enclose the EGF-like 9; calcium-binding domain; it reads DINECSFNNGGCEHTCENTMGSFGCHCRAGYKLHWNKKDCI. N-linked (GlcNAc...) asparagine glycosylation is found at Asn-488, Asn-703, Asn-774, and Asn-803. Residues Cys-822 and Cys-848 are joined by a disulfide bond. Positions 822–934 constitute a CUB domain; it reads CGGELGEFTG…KGFQVPYVTY (113 aa). An interaction with the cholesterol-anchor of SHH region spans residues 860 to 869; sequence ILVVVPEIYL. Cys-875 and Cys-896 are oxidised to a cystine. N-linked (GlcNAc...) asparagine glycosylation occurs at Asn-982.

Interacts with SHH via the cholesterol anchor of the dually lipid-modified SHH (ShhNp). Interacts with PTCH1. Forms homooligomers and heterooligomers with SCUBE1 and SCUBE3. Interacts with VEGFR2. Post-translationally, N-glycosylated.

It is found in the secreted. Its subcellular location is the cell surface. Lipid-binding protein required for SHH long-range signaling by binding to the dually lipid-modified SHH (ShhNp) and by promoting ShhNp mobilization, solubilization and release from the cell membrane. Acts by enhancing the proteolytic processing (shedding) of the lipid-modified N- and C- terminal of ShhNp at the cell surface. Synergizes with DISP1 to cause an increase in SHH secretion. Probable cell surface coreceptor for VEGFR2 involved in VEGFR2-mediated angiogenesis. This Danio rerio (Zebrafish) protein is Signal peptide, CUB and EGF-like domain-containing protein 2 (scube2).